Consider the following 193-residue polypeptide: Adenine phosphoribosyltransferase (193 aa).

This sequence belongs to the purine/pyrimidine phosphoribosyltransferase family. In terms of assembly, homodimer.

The protein localises to the cytoplasm. The catalysed reaction is AMP + diphosphate = 5-phospho-alpha-D-ribose 1-diphosphate + adenine. It participates in purine metabolism; AMP biosynthesis via salvage pathway; AMP from adenine: step 1/1. Catalyzes a salvage reaction resulting in the formation of AMP, that is energically less costly than de novo synthesis. The polypeptide is Adenine phosphoribosyltransferase (Bifidobacterium longum subsp. infantis (strain ATCC 15697 / DSM 20088 / JCM 1222 / NCTC 11817 / S12)).